Here is an 86-residue protein sequence, read N- to C-terminus: Protein K3 homolog (86 aa).

The 72-residue stretch at 15 to 86 (NINDITQGII…LKGYIDVSIV (72 aa)) folds into the S1 motif domain.

It belongs to the poxviridae K3 protein family. As to quaternary structure, interacts with host PKR kinase.

Viral mimic of eIF-2-alpha that acts as a pseudosubstrate for EIF2AK2/PKR kinase. Inhibits therefore eIF-2-alpha phosphorylation by host EIF2AK2/PKR kinase and prevents protein synthesis shutoff. This chain is Protein K3 homolog, found in Sus scrofa (Pig).